The chain runs to 326 residues: uncharacterized protein (326 aa).

It to B.subtilis XkdQ.

This is an uncharacterized protein from Bacillus subtilis (strain 168).